A 379-amino-acid polypeptide reads, in one-letter code: Protein RecA (379 aa).

The span at 1–14 (MSNEIKSISSSNSS) shows a compositional bias: low complexity. The interval 1-24 (MSNEIKSISSSNSSCPPNEARSGE) is disordered. Residue 84 to 91 (GPESSGKT) coordinates ATP.

Belongs to the RecA family.

The protein resides in the cytoplasm. Functionally, can catalyze the hydrolysis of ATP in the presence of single-stranded DNA, the ATP-dependent uptake of single-stranded DNA by duplex DNA, and the ATP-dependent hybridization of homologous single-stranded DNAs. It interacts with LexA causing its activation and leading to its autocatalytic cleavage. The chain is Protein RecA from Prochlorococcus marinus (strain SARG / CCMP1375 / SS120).